The following is a 363-amino-acid chain: MAGSSIGECFRVSTFGESHGPAIGCIVDGCPPGMTLSAADIQTELDRRRPGRSRHTTQRQEADQVEILSGVFEGLTTGTPIGLLIRNTDQRSQDYSKIKDLFRPGHADYTYLQKYGLRDYRGGGRSSARETAMRVAAGAIARKFLRERLGVNIQAWMAQMGPIHAEDFDAAEISHNDFFCPDAGAAIRMADFLDGLRKEGDSIGARVDARVSGMPVGLGEPVFDRLEADIAKAMMSINAVKAIAVGDGFAVVEQRGSYHGDAMAATGFQSNHAGGVLGGISSGQDLTLSVAIKPTSSIRIPRQSIDVHGRPAEVITTGRHDPCVGIRAVPIVEAMLALVIMDHWMRHRAQNADVQAPLPPIPA.

NADP(+) is bound by residues R48 and R54. Residues 125-127 (RSS), 238-239 (NA), G278, 293-297 (KPTSS), and R319 contribute to the FMN site.

This sequence belongs to the chorismate synthase family. In terms of assembly, homotetramer. Requires FMNH2 as cofactor.

The enzyme catalyses 5-O-(1-carboxyvinyl)-3-phosphoshikimate = chorismate + phosphate. The protein operates within metabolic intermediate biosynthesis; chorismate biosynthesis; chorismate from D-erythrose 4-phosphate and phosphoenolpyruvate: step 7/7. Catalyzes the anti-1,4-elimination of the C-3 phosphate and the C-6 proR hydrogen from 5-enolpyruvylshikimate-3-phosphate (EPSP) to yield chorismate, which is the branch point compound that serves as the starting substrate for the three terminal pathways of aromatic amino acid biosynthesis. This reaction introduces a second double bond into the aromatic ring system. The protein is Chorismate synthase of Acidithiobacillus ferrooxidans (strain ATCC 23270 / DSM 14882 / CIP 104768 / NCIMB 8455) (Ferrobacillus ferrooxidans (strain ATCC 23270)).